A 667-amino-acid polypeptide reads, in one-letter code: uncharacterized protein (667 aa).

The tract at residues 321-345 is disordered; that stretch reads AGEAASSDHDQKISRVTRKRPREPK. The Helicase ATP-binding domain maps to 375 to 552; it reads EIYMADTPSV…LQRIGLTGLA (178 aa). Residue 388-395 participates in ATP binding; sequence APPGYGKT. The DEAH box signature appears at 498-501; sequence DEFH.

This sequence belongs to the helicase family. Yeast subtelomeric Y' repeat subfamily.

This is an uncharacterized protein from Saccharomyces cerevisiae (strain ATCC 204508 / S288c) (Baker's yeast).